A 286-amino-acid chain; its full sequence is uncharacterized protein (286 aa).

Belongs to the methyltransferase superfamily.

Involved in osmoadaptation. This is an uncharacterized protein from Emericella nidulans (strain FGSC A4 / ATCC 38163 / CBS 112.46 / NRRL 194 / M139) (Aspergillus nidulans).